A 468-amino-acid chain; its full sequence is 3-isopropylmalate dehydratase large subunit (468 aa).

Residues 53 to 74 (QPSKTVATMDHNVPTDSRDLAG) form a disordered region. 3 residues coordinate [4Fe-4S] cluster: cysteine 347, cysteine 407, and cysteine 410.

Belongs to the aconitase/IPM isomerase family. LeuC type 1 subfamily. In terms of assembly, heterodimer of LeuC and LeuD. The cofactor is [4Fe-4S] cluster.

The enzyme catalyses (2R,3S)-3-isopropylmalate = (2S)-2-isopropylmalate. It participates in amino-acid biosynthesis; L-leucine biosynthesis; L-leucine from 3-methyl-2-oxobutanoate: step 2/4. Catalyzes the isomerization between 2-isopropylmalate and 3-isopropylmalate, via the formation of 2-isopropylmaleate. This chain is 3-isopropylmalate dehydratase large subunit, found in Pasteurella multocida (strain Pm70).